Consider the following 264-residue polypeptide: ATP synthase subunit a (264 aa).

A run of 6 helical transmembrane segments spans residues 32-52 (IDSL…FHSV), 89-109 (VIAP…FMDM), 134-154 (DLNI…YYSI), 177-197 (IPVN…SLAL), 208-228 (LIFI…TLGV), and 235-255 (LIFH…LTIV).

It belongs to the ATPase A chain family. F-type ATPases have 2 components, CF(1) - the catalytic core - and CF(0) - the membrane proton channel. CF(1) has five subunits: alpha(3), beta(3), gamma(1), delta(1), epsilon(1). CF(0) has three main subunits: a(1), b(2) and c(9-12). The alpha and beta chains form an alternating ring which encloses part of the gamma chain. CF(1) is attached to CF(0) by a central stalk formed by the gamma and epsilon chains, while a peripheral stalk is formed by the delta and b chains.

Its subcellular location is the cell inner membrane. Its function is as follows. Key component of the proton channel; it plays a direct role in the translocation of protons across the membrane. This Shewanella piezotolerans (strain WP3 / JCM 13877) protein is ATP synthase subunit a.